The following is a 489-amino-acid chain: Protein SIP5 (489 aa).

The tract at residues 1-84 is disordered; that stretch reads MGNVPGKIDQ…RKTSREKELA (84 aa). Phosphoserine is present on serine 13. Composition is skewed to polar residues over residues 21–32 and 51–69; these read SSYNTTSSNSVI and LVNN…GSHL. A phosphothreonine mark is found at threonine 183 and threonine 433. Residues 419–489 form a disordered region; it reads SNRLIDPSHS…SKNRNTSLRP (71 aa). Phosphoserine is present on serine 436. Residue threonine 438 is modified to Phosphothreonine. The span at 461-477 shows a compositional bias: basic and acidic residues; sequence QMVREAIRLSLEDQDNR.

The protein belongs to the SIP5 family. Interacts with NPA1, SNF1 and REG1.

The protein localises to the cytoplasm. Its function is as follows. May negatively regulate the SNF1 kinase by promoting the interaction of the REG1/GLC7 phosphatase complex with the kinase. Deletion of SIP5 promotes resistance to artemisinin, which is probably an indirect effect of an action on the electron transport chain. In Saccharomyces cerevisiae (strain ATCC 204508 / S288c) (Baker's yeast), this protein is Protein SIP5 (SIP5).